We begin with the raw amino-acid sequence, 246 residues long: MKIYLKFKSYNKRICKLLQLFKLEHDQNCSMGLLINHNSLELYNRENVNQKPIKVDFTSKKNHYRCHHFRRKNEVLYRVSGIKNSYFPTVLDATAGLGNDAFIFSFLGCKVIMIERHPIVAALLKDGLQRGYQDKKIGHWLQTRLHLIVNDSLKMLEIPILQPDVIYLDPMYPFYHKKSLPKKDMQFFRQLIGHNYDSKKLLEVSRKLAKNRIIVKRPYYAKPLSEDKVNHIVTTRNHRFDIYQPF.

S-adenosyl-L-methionine contacts are provided by residues 115–116 (ER) and aspartate 169.

The protein belongs to the methyltransferase superfamily. RsmJ family.

Its subcellular location is the cytoplasm. The enzyme catalyses guanosine(1516) in 16S rRNA + S-adenosyl-L-methionine = N(2)-methylguanosine(1516) in 16S rRNA + S-adenosyl-L-homocysteine + H(+). In terms of biological role, specifically methylates the guanosine in position 1516 of 16S rRNA. The polypeptide is Ribosomal RNA small subunit methyltransferase J (Buchnera aphidicola subsp. Acyrthosiphon pisum (strain Tuc7)).